Here is a 181-residue protein sequence, read N- to C-terminus: Ninjurin-B (181 aa).

Over residues 1–10 (MDSGEVKISL) the composition is skewed to basic and acidic residues. A disordered region spans residues 1 to 72 (MDSGEVKISL…SNKKCSSDLS (72 aa)). Over 1–115 (MDSGEVKISL…YNDKASTYIY (115 aa)) the chain is Extracellular. Residues 12-26 (DSPSSGESFASTTSG) are compositionally biased toward polar residues. Residues 33–49 (RDLDIQVHESHIKDDQF) show a composition bias toward basic and acidic residues. A helix alpha1 region spans residues 80–91 (NKNVAEGLMDIA). A helix alpha2 region spans residues 94–110 (SANANQLRFLITYNDKA). The helical transmembrane segment at 116–136 (SMIMVILSLVLQLLVGIMLIF) threads the bilayer. Residues 137–153 (KRRLKRFRNRSYERTND) are Cytoplasmic-facing. Residues 154 to 174 (LLVMGVFMITVINILLAAFTT) traverse the membrane as a helical segment. The Extracellular segment spans residues 175–181 (TDGGGSH).

The protein belongs to the ninjurin family.

It is found in the membrane. Effector of non-apoptotic necrotic cell death that mediates plasma membrane rupture (cytolysis): oligomerizes in response to death stimuli and promotes plasma membrane rupture by introducing hydrophilic faces of 2 alpha helices into the hydrophobic membrane, leading to release intracellular molecules that propagate the inflammatory response. Also acts as a homophilic transmembrane adhesion molecule that promotes cell adhesion by mediating homophilic interactions via its extracellular region. This is Ninjurin-B from Drosophila melanogaster (Fruit fly).